We begin with the raw amino-acid sequence, 539 residues long: Phosphoenolpyruvate carboxykinase (ATP) (539 aa).

Arg-61, Tyr-195, and Lys-201 together coordinate substrate. ATP contacts are provided by residues Lys-201, His-220, and 238–246 (GLSGTGKTT). Mn(2+) contacts are provided by Lys-201 and His-220. Asp-259 serves as a coordination point for Mn(2+). Residues Glu-287, Arg-325, and Thr-450 each coordinate ATP. Arg-325 is a substrate binding site.

The protein belongs to the phosphoenolpyruvate carboxykinase (ATP) family. It depends on Mn(2+) as a cofactor.

It localises to the cytoplasm. The catalysed reaction is oxaloacetate + ATP = phosphoenolpyruvate + ADP + CO2. The protein operates within carbohydrate biosynthesis; gluconeogenesis. Functionally, involved in the gluconeogenesis. Catalyzes the conversion of oxaloacetate (OAA) to phosphoenolpyruvate (PEP) through direct phosphoryl transfer between the nucleoside triphosphate and OAA. The chain is Phosphoenolpyruvate carboxykinase (ATP) from Methylobacterium radiotolerans (strain ATCC 27329 / DSM 1819 / JCM 2831 / NBRC 15690 / NCIMB 10815 / 0-1).